We begin with the raw amino-acid sequence, 120 residues long: Large ribosomal subunit protein bL36m (120 aa).

This sequence belongs to the bacterial ribosomal protein bL36 family. Component of the mitochondrial ribosome large subunit (39S) which comprises a 16S rRNA and about 50 distinct proteins.

Its subcellular location is the mitochondrion. The polypeptide is Large ribosomal subunit protein bL36m (mrpl36) (Osmerus mordax (Rainbow smelt)).